Consider the following 123-residue polypeptide: Large ribosomal subunit protein bL12 (123 aa).

Belongs to the bacterial ribosomal protein bL12 family. Homodimer. Part of the ribosomal stalk of the 50S ribosomal subunit. Forms a multimeric L10(L12)X complex, where L10 forms an elongated spine to which 2 to 4 L12 dimers bind in a sequential fashion. Binds GTP-bound translation factors.

Functionally, forms part of the ribosomal stalk which helps the ribosome interact with GTP-bound translation factors. Is thus essential for accurate translation. The sequence is that of Large ribosomal subunit protein bL12 from Bacillus licheniformis (strain ATCC 14580 / DSM 13 / JCM 2505 / CCUG 7422 / NBRC 12200 / NCIMB 9375 / NCTC 10341 / NRRL NRS-1264 / Gibson 46).